Reading from the N-terminus, the 97-residue chain is MTLFSSISSISNPMTSSKSSIASFGSGTSMSSNSNACGGGCGGGNGGILGLGLGLGLNLFGGSRSRGACGGNNGGSGNPGNGPFSGGSCCGSPCCGI.

The tract at residues 1–33 (MTLFSSISSISNPMTSSKSSIASFGSGTSMSSN) is disordered.

The protein belongs to the hssA/B family.

This is HssA/B-like protein 47 (hssl47) from Dictyostelium discoideum (Social amoeba).